The following is an 88-amino-acid chain: UPF0298 protein Bcer98_2635 (88 aa).

This sequence belongs to the UPF0298 family.

The protein localises to the cytoplasm. The polypeptide is UPF0298 protein Bcer98_2635 (Bacillus cytotoxicus (strain DSM 22905 / CIP 110041 / 391-98 / NVH 391-98)).